A 448-amino-acid polypeptide reads, in one-letter code: N-succinylarginine dihydrolase (448 aa).

Residues 20-29 (AGLLFGNEAS), Asn-111, and 138-139 (HR) each bind substrate. Glu-175 is an active-site residue. Arg-213 contributes to the substrate binding site. The active site involves His-249. The substrate site is built by Asp-251 and Asn-360. Cys-366 acts as the Nucleophile in catalysis.

The protein belongs to the succinylarginine dihydrolase family. As to quaternary structure, homodimer.

It carries out the reaction N(2)-succinyl-L-arginine + 2 H2O + 2 H(+) = N(2)-succinyl-L-ornithine + 2 NH4(+) + CO2. It functions in the pathway amino-acid degradation; L-arginine degradation via AST pathway; L-glutamate and succinate from L-arginine: step 2/5. Functionally, catalyzes the hydrolysis of N(2)-succinylarginine into N(2)-succinylornithine, ammonia and CO(2). This is N-succinylarginine dihydrolase from Shigella dysenteriae serotype 1 (strain Sd197).